We begin with the raw amino-acid sequence, 461 residues long: Cysteine--tRNA ligase (461 aa).

Cys29 serves as a coordination point for Zn(2+). The 'HIGH' region signature appears at 31–41 (MTVYDLCHLGH). Zn(2+)-binding residues include Cys213, His238, and Glu242. Residues 270–274 (KMSKS) carry the 'KMSKS' region motif. ATP is bound at residue Lys273.

This sequence belongs to the class-I aminoacyl-tRNA synthetase family. As to quaternary structure, monomer. Zn(2+) is required as a cofactor.

Its subcellular location is the cytoplasm. The enzyme catalyses tRNA(Cys) + L-cysteine + ATP = L-cysteinyl-tRNA(Cys) + AMP + diphosphate. The sequence is that of Cysteine--tRNA ligase from Delftia acidovorans (strain DSM 14801 / SPH-1).